The primary structure comprises 698 residues: Serine/threonine-protein kinase Nek8 (698 aa).

The Protein kinase domain maps to 4–258 (YERIRVVGRG…LSHIMAQPLC (255 aa)). ATP contacts are provided by residues 10–18 (VGRGAFGIV) and lysine 33. Aspartate 128 acts as the Proton acceptor in catalysis. Phosphothreonine; by autocatalysis is present on threonine 162. The segment at 278-309 (EKSLTPGPPIASGSTGSRATSARCRGVPRGPV) is disordered. Residues 288–309 (ASGSTGSRATSARCRGVPRGPV) show a composition bias toward low complexity. RCC1 repeat units lie at residues 416-467 (GIIM…LSTD), 468-519 (GELF…LTSP), 520-585 (GRVL…ITAS), 586-637 (GDCY…VGAE), and 638-690 (GEVY…AVRS).

It belongs to the protein kinase superfamily. NEK Ser/Thr protein kinase family. NIMA subfamily. As to quaternary structure, interacts with PKD2; may regulate PKD2 targeting to the cilium. Interacts with ANKS6. Component of a complex containing at least ANKS6, INVS, NEK8 and NPHP3. ANKS6 may organize complex assembly by linking INVS and NPHP3 to NEK8 and INVS may target the complex to the proximal ciliary axoneme. Interacts with ANKS3. Requires Mg(2+) as cofactor. As to expression, kidney, liver, and testis.

It localises to the cytoplasm. The protein localises to the cytoskeleton. It is found in the cell projection. Its subcellular location is the cilium. The protein resides in the microtubule organizing center. It localises to the centrosome. The protein localises to the cilium axoneme. It carries out the reaction L-seryl-[protein] + ATP = O-phospho-L-seryl-[protein] + ADP + H(+). It catalyses the reaction L-threonyl-[protein] + ATP = O-phospho-L-threonyl-[protein] + ADP + H(+). Its function is as follows. Required for renal tubular integrity. May regulate local cytoskeletal structure in kidney tubule epithelial cells. May regulate ciliary biogenesis through targeting of proteins to the cilia. Plays a role in organogenesis and is involved in the regulation of the Hippo signaling pathway. The chain is Serine/threonine-protein kinase Nek8 (Nek8) from Mus musculus (Mouse).